Here is a 446-residue protein sequence, read N- to C-terminus: NADH oxidase (446 aa).

FAD contacts are provided by residues Gly7–Ala11, Glu32, Cys42, Val79, Thr110–Ser113, Lys132, and Tyr157. The active-site Proton acceptor is His10. The Redox-active role is filled by Cys42. At Cys42 the chain carries Cysteine sulfinic acid (-SO2H). Residues Val150–Ala165, Asp177, Tyr186, and Gly243 each bind NAD(+). Residues Thr271–Asp281, Leu298, Ala299, and Thr300 contribute to the FAD site. Residue Gly328 coordinates NAD(+). Residue Phe424 participates in FAD binding.

Belongs to the class-III pyridine nucleotide-disulfide oxidoreductase family. As to quaternary structure, homodimer. FAD serves as cofactor. In terms of processing, the N-terminus is blocked.

It catalyses the reaction 2 NADH + O2 + 2 H(+) = 2 NAD(+) + 2 H2O. Its function is as follows. Catalyzes the four-electron reduction of molecular oxygen to water. The polypeptide is NADH oxidase (nox) (Enterococcus faecalis (strain ATCC 700802 / V583)).